The chain runs to 128 residues: Small ribosomal subunit protein uS8c (128 aa).

Belongs to the universal ribosomal protein uS8 family. In terms of assembly, part of the 30S ribosomal subunit.

The protein resides in the plastid. It is found in the chloroplast. Functionally, one of the primary rRNA binding proteins, it binds directly to 16S rRNA central domain where it helps coordinate assembly of the platform of the 30S subunit. The polypeptide is Small ribosomal subunit protein uS8c (rps8) (Gnetum parvifolium (Small-leaved jointfir)).